We begin with the raw amino-acid sequence, 276 residues long: Undecaprenyl-diphosphatase (276 aa).

5 helical membrane passes run Tyr-84–Phe-104, Leu-115–Leu-135, Phe-188–Ala-208, Gln-222–Leu-242, and Met-250–Thr-270.

Belongs to the UppP family.

The protein resides in the cell membrane. The enzyme catalyses di-trans,octa-cis-undecaprenyl diphosphate + H2O = di-trans,octa-cis-undecaprenyl phosphate + phosphate + H(+). Functionally, catalyzes the dephosphorylation of undecaprenyl diphosphate (UPP). Confers resistance to bacitracin. This Mycobacterium ulcerans (strain Agy99) protein is Undecaprenyl-diphosphatase.